The following is a 332-amino-acid chain: Isopentenyl phosphate kinase (332 aa).

M1 is subject to N-acetylmethionine. 18–22 is a binding site for ATP; the sequence is KLGGA. A96 is a substrate binding site. G97 contributes to the ATP binding site. Substrate is bound by residues H101 and G202. ATP-binding positions include D223, 228–233, G279, and K283; that span reads YDRPPS.

This sequence belongs to the isopentenyl phosphate kinase family.

It is found in the cytoplasm. The protein resides in the cytosol. It catalyses the reaction isopentenyl phosphate + ATP = isopentenyl diphosphate + ADP. Catalyzes the formation of isopentenyl diphosphate (IPP), the universal five-carbon isoprenoid building block of all natural isoprenoids. Acts in parallel with the mevalonate (MVA) pathway and plays an important role in regulating the formation of both MVA and methylerythritol phosphate (MEP) pathway-derived terpenoid compounds by controlling the ratio of isopentenyl phosphate (IP) and dimethylallyl phosphate (DMAP) to isopentenyl diphosphate (IPP) and dimethylallyl diphosphate (DMAPP). Controls the levels of IP and DMAP that are competitive inhibitors of the farnesyl diphosphate synthase. Regulates the production of farnesyl diphosphate-derived terpenoids in the cytosol, and geranyl diphosphate-derived compounds in plastids. In Arabidopsis thaliana (Mouse-ear cress), this protein is Isopentenyl phosphate kinase.